A 394-amino-acid chain; its full sequence is ATP phosphoribosyltransferase regulatory subunit (394 aa).

This sequence belongs to the class-II aminoacyl-tRNA synthetase family. HisZ subfamily. In terms of assembly, heteromultimer composed of HisG and HisZ subunits.

It is found in the cytoplasm. It functions in the pathway amino-acid biosynthesis; L-histidine biosynthesis; L-histidine from 5-phospho-alpha-D-ribose 1-diphosphate: step 1/9. Functionally, required for the first step of histidine biosynthesis. May allow the feedback regulation of ATP phosphoribosyltransferase activity by histidine. The polypeptide is ATP phosphoribosyltransferase regulatory subunit (Saccharophagus degradans (strain 2-40 / ATCC 43961 / DSM 17024)).